Reading from the N-terminus, the 571-residue chain is Proline--tRNA ligase (571 aa).

Belongs to the class-II aminoacyl-tRNA synthetase family. ProS type 1 subfamily. In terms of assembly, homodimer.

Its subcellular location is the cytoplasm. It carries out the reaction tRNA(Pro) + L-proline + ATP = L-prolyl-tRNA(Pro) + AMP + diphosphate. Its function is as follows. Catalyzes the attachment of proline to tRNA(Pro) in a two-step reaction: proline is first activated by ATP to form Pro-AMP and then transferred to the acceptor end of tRNA(Pro). As ProRS can inadvertently accommodate and process non-cognate amino acids such as alanine and cysteine, to avoid such errors it has two additional distinct editing activities against alanine. One activity is designated as 'pretransfer' editing and involves the tRNA(Pro)-independent hydrolysis of activated Ala-AMP. The other activity is designated 'posttransfer' editing and involves deacylation of mischarged Ala-tRNA(Pro). The misacylated Cys-tRNA(Pro) is not edited by ProRS. In Vibrio parahaemolyticus serotype O3:K6 (strain RIMD 2210633), this protein is Proline--tRNA ligase.